We begin with the raw amino-acid sequence, 1383 residues long: ATP-dependent RNA helicase TDRD9 (1383 aa).

Positions 35 to 82 (EAPREEVQRSEEVPNEDPTAQAQVPVKATAPARPASTSGRSLSQRSSE) are disordered. The segment covering 36-46 (APREEVQRSEE) has biased composition (basic and acidic residues). Low complexity predominate over residues 70 to 80 (STSGRSLSQRS). The 167-residue stretch at 144-310 (ISLIESNSVV…FAVPVQNKMN (167 aa)) folds into the Helicase ATP-binding domain. 157–164 (GATGSGKS) lines the ATP pocket. A DEAH box motif is present at residues 256–259 (DEVH). In terms of domain architecture, Helicase C-terminal spans 378–545 (SGAQFVSERS…ILKVKLLDMG (168 aa)). Positions 945 to 1005 (HPHPDLVCLA…REIPCQFLEL (61 aa)) constitute a Tudor domain.

This sequence belongs to the DEAD box helicase family. DEAH subfamily. In terms of assembly, interacts with piRNA-associated proteins PIWIL1 and PIWIL4. As to expression, predominantly expressed in reproductive organs. Detected in mitotic spermatogonia, meiotic spermatocytes (predominantly at the pachytene stage), haploid spermatids in the testis, and in growing oocytes in the ovary (at protein level).

Its subcellular location is the cytoplasm. It is found in the nucleus. It carries out the reaction ATP + H2O = ADP + phosphate + H(+). Functionally, ATP-binding RNA helicase which plays a central role during spermatogenesis by repressing transposable elements and preventing their mobilization, which is essential for the germline integrity. Acts via the piRNA metabolic process, which mediates the repression of transposable elements during meiosis by forming complexes composed of piRNAs and Piwi proteins and governs the methylation and subsequent repression of transposons. Acts downstream of piRNA biogenesis: exclusively required for transposon silencing in the nucleus, suggesting that it acts as a nuclear effector in the nucleus together with PIWIL4. This Mus musculus (Mouse) protein is ATP-dependent RNA helicase TDRD9.